The chain runs to 309 residues: Protein FdhE homolog (309 aa).

It belongs to the FdhE family.

The protein resides in the cytoplasm. Its function is as follows. Necessary for formate dehydrogenase activity. The chain is Protein FdhE homolog from Cronobacter sakazakii (strain ATCC BAA-894) (Enterobacter sakazakii).